We begin with the raw amino-acid sequence, 363 residues long: Pyrimidine monooxygenase RutA (363 aa).

Residues 49–50, Asn-115, Glu-124, 140–141, and Ser-190 contribute to the FMN site; these read IK and RY.

The protein belongs to the NtaA/SnaA/DszA monooxygenase family. RutA subfamily.

The enzyme catalyses uracil + FMNH2 + NADH + O2 = (Z)-3-ureidoacrylate + FMN + NAD(+) + H2O + H(+). The catalysed reaction is thymine + FMNH2 + NADH + O2 = (Z)-2-methylureidoacrylate + FMN + NAD(+) + H2O + H(+). In terms of biological role, catalyzes the pyrimidine ring opening between N-3 and C-4 by an unusual flavin hydroperoxide-catalyzed mechanism, adding oxygen atoms in the process to yield ureidoacrylate peracid, that immediately reacts with FMN forming ureidoacrylate and FMN-N(5)-oxide. The FMN-N(5)-oxide reacts spontaneously with NADH to produce FMN. Requires the flavin reductase RutF to regenerate FMN in vivo. The protein is Pyrimidine monooxygenase RutA of Enterobacter sp. (strain 638).